The sequence spans 186 residues: Ribosome-recycling factor (186 aa).

This sequence belongs to the RRF family.

It is found in the cytoplasm. In terms of biological role, responsible for the release of ribosomes from messenger RNA at the termination of protein biosynthesis. May increase the efficiency of translation by recycling ribosomes from one round of translation to another. The polypeptide is Ribosome-recycling factor (Leifsonia xyli subsp. xyli (strain CTCB07)).